The primary structure comprises 281 residues: Pantothenate synthetase (281 aa).

30–37 is an ATP binding site; sequence MGNLHQGH. His37 (proton donor) is an active-site residue. Gln61 contacts (R)-pantoate. Gln61 contacts beta-alanine. Position 149–152 (149–152) interacts with ATP; that stretch reads GNKD. Gln155 is a (R)-pantoate binding site. Residues Ile178 and 186 to 189 each bind ATP; that span reads MSSR.

Belongs to the pantothenate synthetase family. As to quaternary structure, homodimer.

The protein localises to the cytoplasm. The catalysed reaction is (R)-pantoate + beta-alanine + ATP = (R)-pantothenate + AMP + diphosphate + H(+). It functions in the pathway cofactor biosynthesis; (R)-pantothenate biosynthesis; (R)-pantothenate from (R)-pantoate and beta-alanine: step 1/1. Functionally, catalyzes the condensation of pantoate with beta-alanine in an ATP-dependent reaction via a pantoyl-adenylate intermediate. The polypeptide is Pantothenate synthetase (Shewanella sp. (strain ANA-3)).